The following is a 514-amino-acid chain: MDAVKKKHWWQSPQLTWSVIGLLCLLVGYLVVLMYAQGEYLFAIMTLILSSVGLYIFSNRKAYAWRYVYPGLAGMGLFVLFPLICTIAIAFTNYSSTNQLTFERAQQVLMDRSFQAGKAYNFSLYPAGDEWQLALTDGESGKNYLSEAFKFGGEQKLALKEADALPQGERANLRVITQNRAALNQLTAVLPDESKVIMSSLRQFSGTQPLYALANDGTLTNNQSGVKYRPNADIGFYQSINADGSWGNEKLSPGYTVTIGWDNFTRVFQDEGIQKPFFAIFVWTVVFSVLTVILTVAVGMVLACLVQWEALKGKAIYRVLLILPYAVPSFISILIFKGLFNQSFGEINMMLSALFGIKPAWFSDPTTARTMIIIVNTWLGYPYMMILCMGLLKAIPDDLYEASAMDGAGPFQNFFKITLPLLIKPLTPLMIASFAFNFNNFVLIQLLTNGGPDRLGTTTPAGYTDLLVSYTYRIAFEGGGGQDFGLAAAIATLIFLLVGALAIVNLKATRMKFD.

The Cytoplasmic segment spans residues 1–12; that stretch reads MDAVKKKHWWQS. The chain crosses the membrane as a helical span at residues 13-35; the sequence is PQLTWSVIGLLCLLVGYLVVLMY. Topologically, residues 36–39 are periplasmic; the sequence is AQGE. Residues 40–57 traverse the membrane as a helical segment; that stretch reads YLFAIMTLILSSVGLYIF. Over 58–69 the chain is Cytoplasmic; that stretch reads SNRKAYAWRYVY. A helical transmembrane segment spans residues 70–92; that stretch reads PGLAGMGLFVLFPLICTIAIAFT. Over 93–283 the chain is Periplasmic; sequence NYSSTNQLTF…QKPFFAIFVW (191 aa). Residues 281 to 505 enclose the ABC transmembrane type-1 domain; the sequence is FVWTVVFSVL…LLVGALAIVN (225 aa). A helical membrane pass occupies residues 284–306; sequence TVVFSVLTVILTVAVGMVLACLV. Residues 307-318 lie on the Cytoplasmic side of the membrane; that stretch reads QWEALKGKAIYR. Residues 319–341 form a helical membrane-spanning segment; sequence VLLILPYAVPSFISILIFKGLFN. Topologically, residues 342-369 are periplasmic; that stretch reads QSFGEINMMLSALFGIKPAWFSDPTTAR. A helical transmembrane segment spans residues 370 to 392; it reads TMIIIVNTWLGYPYMMILCMGLL. The Cytoplasmic segment spans residues 393 to 412; the sequence is KAIPDDLYEASAMDGAGPFQ. Residues 413-435 form a helical membrane-spanning segment; that stretch reads NFFKITLPLLIKPLTPLMIASFA. The Periplasmic segment spans residues 436–483; it reads FNFNNFVLIQLLTNGGPDRLGTTTPAGYTDLLVSYTYRIAFEGGGGQD. Residues 484–506 form a helical membrane-spanning segment; sequence FGLAAAIATLIFLLVGALAIVNL. Over 507–514 the chain is Cytoplasmic; it reads KATRMKFD.

It belongs to the binding-protein-dependent transport system permease family. MalFG subfamily. As to quaternary structure, the complex is composed of two ATP-binding proteins (MalK), two transmembrane proteins (MalG and MalF) and a solute-binding protein (MalE).

It is found in the cell inner membrane. Functionally, part of the ABC transporter complex MalEFGK involved in maltose/maltodextrin import. Probably responsible for the translocation of the substrate across the membrane. The chain is Maltose/maltodextrin transport system permease protein MalF (malF) from Klebsiella aerogenes (Enterobacter aerogenes).